A 253-amino-acid polypeptide reads, in one-letter code: MEKNTAASGQLMTSSAEATPSSPKRPAGRTKFQETRHLVFRGVRWRGCAGRWVCKVRVPGSRGDRFWIGTSDTAEETARTHDAAMLALCGASASLNFADSAWLLHVPRAPVVSGLRPPAARCATRCLQGHRRVPAPGRGSTATATATSGDAASTAPPSAPVLSAKQCEFIFLSSLDCWMLMSKLISSSRAKGSLCLRKNPISFCMVTNSYTALLLEYIILQMNSMIVLIHELSKYQVFLLLTMITHHLFQWRR.

Residues 1–22 (MEKNTAASGQLMTSSAEATPSS) show a composition bias toward polar residues. A disordered region spans residues 1–31 (MEKNTAASGQLMTSSAEATPSSPKRPAGRTK). Positions 39 to 98 (VFRGVRWRGCAGRWVCKVRVPGSRGDRFWIGTSDTAEETARTHDAAMLALCGASASLNFA) form a DNA-binding region, AP2/ERF. The tract at residues 131-153 (RRVPAPGRGSTATATATSGDAAS) is disordered. Positions 134–153 (PAPGRGSTATATATSGDAAS) are enriched in low complexity.

Belongs to the AP2/ERF transcription factor family. ERF subfamily.

It localises to the nucleus. Its function is as follows. Transcriptional activator that binds specifically to the DNA sequence 5'-[AG]CCGAC-3'. Binding to the C-repeat/DRE element mediates high salinity- and dehydration-inducible transcription. This Oryza sativa subsp. indica (Rice) protein is Dehydration-responsive element-binding protein 1D (DREB1D).